The chain runs to 151 residues: uncharacterized protein (151 aa).

It to M.jannaschii MJ1244 and MJ1245.

This is an uncharacterized protein from Methanothermobacter thermautotrophicus (strain ATCC 29096 / DSM 1053 / JCM 10044 / NBRC 100330 / Delta H) (Methanobacterium thermoautotrophicum).